The following is an 814-amino-acid chain: Putative serine/threonine-protein kinase-like protein CCR3 (814 aa).

Residues 1–30 (MKRFINSTVTFSVTVTIAVIIFFLLSPVTS) form the signal peptide. N-linked (GlcNAc...) asparagine glycans are attached at residues Asn6, Asn68, Asn136, Asn215, Asn226, Asn251, Asn260, Asn275, Asn299, and Asn309. The Extracellular segment spans residues 31–393 (LGSGSTYAVV…SSPPSKALTR (363 aa)). The span at 366 to 381 (SQFPLPPPPPPPPPSP) shows a compositional bias: pro residues. The segment at 366–388 (SQFPLPPPPPPPPPSPSTSSPPS) is disordered. The helical transmembrane segment at 394 to 414 (GLLAFAIVGSVGAFAGICSVV) threads the bilayer. At 415–814 (YCLWTGVCLG…SSGICSIVSD (400 aa)) the chain is on the cytoplasmic side. Residues 433–478 (QPTITRGGSNSRSNSSNSRSLSIRRQGSRMLSMRRQRSGTSSMKHA) form a disordered region. Over residues 441-457 (SNSRSNSSNSRSLSIRR) the composition is skewed to low complexity. The Protein kinase domain occupies 496–794 (FSLENKIGSG…DIVGNLERAL (299 aa)). ATP is bound by residues 502–510 (IGSGSFGVV) and Lys524. Asp631 serves as the catalytic Proton acceptor.

It belongs to the protein kinase superfamily. Ser/Thr protein kinase family. As to quaternary structure, homodimer. In terms of tissue distribution, expressed in roots, leaves, shoot apical meristems (SAM), and floral buds.

Its subcellular location is the membrane. The catalysed reaction is L-seryl-[protein] + ATP = O-phospho-L-seryl-[protein] + ADP + H(+). The enzyme catalyses L-threonyl-[protein] + ATP = O-phospho-L-threonyl-[protein] + ADP + H(+). In terms of biological role, serine/threonine-protein kinase. The chain is Putative serine/threonine-protein kinase-like protein CCR3 (CCR3) from Arabidopsis thaliana (Mouse-ear cress).